Consider the following 96-residue polypeptide: Dynein light chain roadblock-type 1 (96 aa).

At A2 the chain carries N-acetylalanine.

This sequence belongs to the GAMAD family. As to quaternary structure, homodimer. The cytoplasmic dynein 1 complex consists of two catalytic heavy chains (HCs) and a number of non-catalytic subunits presented by intermediate chains (ICs), light intermediate chains (LICs) and light chains (LCs); the composition seems to vary in respect to the IC, LIC and LC composition. The heavy chain homodimer serves as a scaffold for the probable homodimeric assembly of the respective non-catalytic subunits. The ICs and LICs bind directly to the HC dimer and the LCs assemble on the IC dimer. Interacts with DYNLRB2. Interacts with DYNC1I1 and DYNC1I2. Interacts with RAB6A isoform 1 (GTP-bound); the interaction is direct. Interacts with RAB6A isoform 2 (GDP-bound); the interaction is direct. Interacts with RAB6B (GDP-bound). As to expression, high expression in heart, liver, brain and pancreas; moderate in placenta, skeletal muscle and kidney; low in lung, prostate, testis, small intestine and colon. Isoform 1 expression is up-regulated in 64% hepatocellular carcinoma (HCC) patients.

It localises to the cytoplasm. The protein resides in the cytoskeleton. Its function is as follows. Acts as one of several non-catalytic accessory components of the cytoplasmic dynein 1 complex that are thought to be involved in linking dynein to cargos and to adapter proteins that regulate dynein function. Cytoplasmic dynein 1 acts as a motor for the intracellular retrograde motility of vesicles and organelles along microtubules. The protein is Dynein light chain roadblock-type 1 of Homo sapiens (Human).